The following is a 216-amino-acid chain: Large ribosomal subunit protein uL3 (216 aa).

The interval 134–153 (RATHGNSRSHNVPGSIGMAQ) is disordered. N5-methylglutamine is present on Gln-153.

This sequence belongs to the universal ribosomal protein uL3 family. In terms of assembly, part of the 50S ribosomal subunit. Forms a cluster with proteins L14 and L19. Post-translationally, methylated by PrmB.

Functionally, one of the primary rRNA binding proteins, it binds directly near the 3'-end of the 23S rRNA, where it nucleates assembly of the 50S subunit. The polypeptide is Large ribosomal subunit protein uL3 (Cupriavidus pinatubonensis (strain JMP 134 / LMG 1197) (Cupriavidus necator (strain JMP 134))).